A 471-amino-acid polypeptide reads, in one-letter code: Ribulose bisphosphate carboxylase large chain 2 (471 aa).

Asn-116 and Thr-166 together coordinate substrate. Lys-168 functions as the Proton acceptor in the catalytic mechanism. Lys-170 provides a ligand contact to substrate. The Mg(2+) site is built by Lys-194, Asp-196, and Glu-197. Lys-194 is subject to N6-carboxylysine. His-287 (proton acceptor) is an active-site residue. Residues Arg-288, His-320, and Ser-372 each coordinate substrate.

It belongs to the RuBisCO large chain family. Type I subfamily. In terms of assembly, heterohexadecamer of 8 large chains and 8 small chains. The cofactor is Mg(2+).

The protein resides in the carboxysome. It catalyses the reaction 2 (2R)-3-phosphoglycerate + 2 H(+) = D-ribulose 1,5-bisphosphate + CO2 + H2O. It carries out the reaction D-ribulose 1,5-bisphosphate + O2 = 2-phosphoglycolate + (2R)-3-phosphoglycerate + 2 H(+). In terms of biological role, ruBisCO catalyzes two reactions: the carboxylation of D-ribulose 1,5-bisphosphate, the primary event in carbon dioxide fixation, as well as the oxidative fragmentation of the pentose substrate. Both reactions occur simultaneously and in competition at the same active site. This Hydrogenovibrio marinus protein is Ribulose bisphosphate carboxylase large chain 2.